Here is a 297-residue protein sequence, read N- to C-terminus: MLILQAFIQSPGETFLNLGFITIRWYGLLISVSVLIGLFVSKKLAKARNINPEYISEILPSLIISSILGARAYYVIFEWRQYSGENFFTSFELFNSIIKIPSFFAVWEGGIAIHGGLIGGLISIIYFCKSKNINLKTFIDILIPSIILGQSIGRWGNFFNNEAFGVPTNLPWKLFIPIQNRPLEFLNYEFFHPTFLYESLWNLLIFIALIIIFNKQNKTDFFRPGFISFLYLISYSFGRFWIEGLRTDPLCIGGLPPFCDGGIRMAQFISIFLFSSGLIGIFFLRLRSCNGKNRKNG.

4 helical membrane passes run 20 to 40 (FITI…GLFV), 57 to 77 (EILP…YVIF), 105 to 125 (AVWE…ISII), and 133 to 153 (INLK…QSIG). Position 154 (Arg154) interacts with a 1,2-diacyl-sn-glycero-3-phospho-(1'-sn-glycerol). 3 helical membrane passes run 193–213 (PTFL…IIIF), 225–245 (GFIS…IEGL), and 266–286 (AQFI…FLRL).

The protein belongs to the Lgt family.

It is found in the cell inner membrane. The enzyme catalyses L-cysteinyl-[prolipoprotein] + a 1,2-diacyl-sn-glycero-3-phospho-(1'-sn-glycerol) = an S-1,2-diacyl-sn-glyceryl-L-cysteinyl-[prolipoprotein] + sn-glycerol 1-phosphate + H(+). It functions in the pathway protein modification; lipoprotein biosynthesis (diacylglyceryl transfer). Catalyzes the transfer of the diacylglyceryl group from phosphatidylglycerol to the sulfhydryl group of the N-terminal cysteine of a prolipoprotein, the first step in the formation of mature lipoproteins. The chain is Phosphatidylglycerol--prolipoprotein diacylglyceryl transferase from Prochlorococcus marinus (strain MIT 9215).